Consider the following 29-residue polypeptide: Cytochrome b6-f complex subunit 8 (29 aa).

Residues 3–23 (IVNIAWAALMVVSTFSLTLVV) form a helical membrane-spanning segment.

It belongs to the PetN family. The 4 large subunits of the cytochrome b6-f complex are cytochrome b6, subunit IV (17 kDa polypeptide, PetD), cytochrome f and the Rieske protein, while the 4 small subunits are PetG, PetL, PetM and PetN. The complex functions as a dimer.

It is found in the plastid. It localises to the chloroplast thylakoid membrane. Component of the cytochrome b6-f complex, which mediates electron transfer between photosystem II (PSII) and photosystem I (PSI), cyclic electron flow around PSI, and state transitions. The protein is Cytochrome b6-f complex subunit 8 of Huperzia lucidula (Shining clubmoss).